Reading from the N-terminus, the 146-residue chain is Ribonuclease H (146 aa).

An RNase H type-1 domain is found at 1 to 143 (MKEIIIYTDG…CDQLARNAIK (143 aa)). Mg(2+) is bound by residues D9, E47, D70, and D135.

Belongs to the RNase H family. As to quaternary structure, monomer. It depends on Mg(2+) as a cofactor.

It is found in the cytoplasm. It carries out the reaction Endonucleolytic cleavage to 5'-phosphomonoester.. Functionally, endonuclease that specifically degrades the RNA of RNA-DNA hybrids. This Syntrophomonas wolfei subsp. wolfei (strain DSM 2245B / Goettingen) protein is Ribonuclease H.